A 371-amino-acid polypeptide reads, in one-letter code: Queuine tRNA-ribosyltransferase (371 aa).

D90 functions as the Proton acceptor in the catalytic mechanism. Substrate contacts are provided by residues 90–94, D144, Q188, and G215; that span reads DSGGF. The segment at 246 to 252 is RNA binding; the sequence is GVGTPED. The active-site Nucleophile is the D265. An RNA binding; important for wobble base 34 recognition region spans residues 270 to 274; that stretch reads TRNAR. The Zn(2+) site is built by C303, C305, C308, and H334.

The protein belongs to the queuine tRNA-ribosyltransferase family. As to quaternary structure, homodimer. Within each dimer, one monomer is responsible for RNA recognition and catalysis, while the other monomer binds to the replacement base PreQ1. It depends on Zn(2+) as a cofactor.

The enzyme catalyses 7-aminomethyl-7-carbaguanine + guanosine(34) in tRNA = 7-aminomethyl-7-carbaguanosine(34) in tRNA + guanine. Its pathway is tRNA modification; tRNA-queuosine biosynthesis. Its function is as follows. Catalyzes the base-exchange of a guanine (G) residue with the queuine precursor 7-aminomethyl-7-deazaguanine (PreQ1) at position 34 (anticodon wobble position) in tRNAs with GU(N) anticodons (tRNA-Asp, -Asn, -His and -Tyr). Catalysis occurs through a double-displacement mechanism. The nucleophile active site attacks the C1' of nucleotide 34 to detach the guanine base from the RNA, forming a covalent enzyme-RNA intermediate. The proton acceptor active site deprotonates the incoming PreQ1, allowing a nucleophilic attack on the C1' of the ribose to form the product. After dissociation, two additional enzymatic reactions on the tRNA convert PreQ1 to queuine (Q), resulting in the hypermodified nucleoside queuosine (7-(((4,5-cis-dihydroxy-2-cyclopenten-1-yl)amino)methyl)-7-deazaguanosine). The chain is Queuine tRNA-ribosyltransferase from Neisseria gonorrhoeae (strain ATCC 700825 / FA 1090).